The following is a 129-amino-acid chain: Small ribosomal subunit protein uS11 (129 aa).

It belongs to the universal ribosomal protein uS11 family. In terms of assembly, part of the 30S ribosomal subunit. Interacts with proteins S7 and S18. Binds to IF-3.

Its function is as follows. Located on the platform of the 30S subunit, it bridges several disparate RNA helices of the 16S rRNA. Forms part of the Shine-Dalgarno cleft in the 70S ribosome. This Bartonella bacilliformis (strain ATCC 35685 / KC583 / Herrer 020/F12,63) protein is Small ribosomal subunit protein uS11.